Reading from the N-terminus, the 239-residue chain is Methylthioribulose-1-phosphate dehydratase (239 aa).

C94 is a substrate binding site. H112 and H114 together coordinate Zn(2+). E136 acts as the Proton donor/acceptor in catalysis. H192 provides a ligand contact to Zn(2+).

The protein belongs to the aldolase class II family. MtnB subfamily. It depends on Zn(2+) as a cofactor.

The protein localises to the cytoplasm. It carries out the reaction 5-(methylsulfanyl)-D-ribulose 1-phosphate = 5-methylsulfanyl-2,3-dioxopentyl phosphate + H2O. Its pathway is amino-acid biosynthesis; L-methionine biosynthesis via salvage pathway; L-methionine from S-methyl-5-thio-alpha-D-ribose 1-phosphate: step 2/6. Its function is as follows. Catalyzes the dehydration of methylthioribulose-1-phosphate (MTRu-1-P) into 2,3-diketo-5-methylthiopentyl-1-phosphate (DK-MTP-1-P). Functions in the methionine salvage pathway. May play a role in apoptosis. This is Methylthioribulose-1-phosphate dehydratase from Xenopus laevis (African clawed frog).